The primary structure comprises 409 residues: Accessory Sec system protein translocase subunit SecY2 (409 aa).

Helical transmembrane passes span 16-36 (ILIT…PIPG), 61-81 (LSQV…MILL), 104-124 (VVML…FQYH), 132-152 (LLLA…IGNL), 161-181 (MTIL…PLIF), 190-210 (LAII…ITFE), 242-262 (GMAF…IILL), 286-306 (GVVI…FVNI), 341-361 (LFGT…LLFA), and 374-394 (TGIF…FQVI).

Belongs to the SecY/SEC61-alpha family. SecY2 subfamily. Component of the accessory SecA2/SecY2 protein translocase complex required to export cell wall proteins. May form heterotrimers with SecE and SecG subunits.

It localises to the cell membrane. Its function is as follows. Part of the accessory SecA2/SecY2 system specifically required for export of possible cell wall proteins. The central subunit of a protein translocation channel. The polypeptide is Accessory Sec system protein translocase subunit SecY2 (Streptococcus agalactiae serotype III (strain NEM316)).